The primary structure comprises 578 residues: Nuclear receptor subfamily 1 group D member 2 (578 aa).

The segment at 1 to 60 is required for phosphorylation by CSNK1E and cytoplasmic localization; it reads MELNAGGVIAYISSSSSASSPASCHSEGSENSFQSSSSSVPSSPNSSNCDANGNPKNTDV. The modulating stretch occupies residues 1 to 99; that stretch reads MELNAGGVIA…HSGMTKFSGM (99 aa). Low complexity predominate over residues 13–47; the sequence is SSSSSASSPASCHSEGSENSFQSSSSSVPSSPNSS. The segment at 13 to 89 is disordered; sequence SSSSSASSPA…KPGAPGMTKS (77 aa). Ser-46 is modified (phosphoserine; by GSK3-beta). Over residues 48–61 the composition is skewed to polar residues; the sequence is NCDANGNPKNTDVS. The nuclear receptor DNA-binding region spans 100–176; sequence VLLCKVCGDV…VGMSRDAVRF (77 aa). 2 consecutive NR C4-type zinc fingers follow at residues 103-123 and 140-164; these read CKVCGDVASGFHYGVHACEGC and CLKNENCSIMRMNRNRCQQCRFKKC. 2 positions are modified to N6-acetyllysine; by KAT5: Lys-162 and Lys-163. Residues 214-247 form a disordered region; the sequence is EPHEQSVPPAQEQLRPKPQLEQENIKSTPPPSDF. Over residues 227-237 the composition is skewed to basic and acidic residues; it reads LRPKPQLEQEN. 2 disulfides stabilise this stretch: Cys-336–Cys-342 and Cys-373–Cys-383. The 211-residue stretch at 368 to 578 folds into the NR LBD domain; sequence RNSYLCSTGG…EELLAFKVHP (211 aa). Heme-binding residues include Cys-383 and His-567. The interval 396 to 578 is interaction with ZNHIT1; the sequence is SGHEIWEEFS…EELLAFKVHP (183 aa).

This sequence belongs to the nuclear hormone receptor family. NR1 subfamily. In terms of assembly, binds DNA as a monomer or a homodimer. Interacts with NCOA5 coactivator, leading to a strong increase of transcription of target genes. Interacts (via N-terminus) with KAT5. Interacts (via C-terminus) with HDAC1. Interacts with ZNHIT1. Interacts with SIAH2. Deacetylated by HDAC1. Acetylation and deacetylation regulate its transcriptional regulatory activity. In terms of processing, under more reducing intracellular redox conditions, Cys-383 is in its heme-bound state, which is optimal for recruitment of the NCOR1/HDAC3 corepressor complex and repression of target genes. When subjected to oxidative stress conditions, Cys-383 undergoes oxidation to form a disulfide bridge with Cys-373, also triggering a ligand switch that results in release of bound heme and derepression of target genes. Post-translationally, ubiquitinated by SIAH2; leading to its proteasomal degradation. Phosphorylated by CSNK1E; phosphorylation enhances its cytoplasmic localization.

It is found in the nucleus. The protein resides in the cytoplasm. The heme-bound form can bind gaseous signaling molecules such as CO and nitric oxide (NO) and NO can reverse its transcriptional repressor activity. Its function is as follows. Transcriptional repressor which coordinates circadian rhythm and metabolic pathways in a heme-dependent manner. Integral component of the complex transcription machinery that governs circadian rhythmicity and forms a critical negative limb of the circadian clock by directly repressing the expression of core clock components BMAL1 and CLOCK. Also regulates genes involved in metabolic functions, including lipid metabolism and the inflammatory response. Acts as a receptor for heme which stimulates its interaction with the NCOR1/HDAC3 corepressor complex, enhancing transcriptional repression. Recognizes two classes of DNA response elements within the promoter of its target genes and can bind to DNA as either monomers or homodimers, depending on the nature of the response element. Binds as a monomer to a response element composed of the consensus half-site motif 5'-[A/G]GGTCA-3' preceded by an A/T-rich 5' sequence (RevRE), or as a homodimer to a direct repeat of the core motif spaced by two nuclegotides (RevDR-2). Acts as a potent competitive repressor of ROR alpha (RORA) function and also negatively regulates the expression of NR1D1. Regulates lipid and energy homeostasis in the skeletal muscle via repression of genes involved in lipid metabolism and myogenesis including: CD36, FABP3, FABP4, UCP3, SCD1 and MSTN. Regulates hepatic lipid metabolism via the repression of APOC3. Represses gene expression at a distance in macrophages by inhibiting the transcription of enhancer-derived RNAs (eRNAs). In addition to its activity as a repressor, can also act as a transcriptional activator. Acts as a transcriptional activator of the sterol regulatory element-binding protein 1 (SREBF1) and the inflammatory mediator interleukin-6 (IL6) in the skeletal muscle. Plays a role in the regulation of circadian sleep/wake cycle; essential for maintaining wakefulness during the dark phase or active period. Key regulator of skeletal muscle mitochondrial function; negatively regulates the skeletal muscle expression of core clock genes and genes involved in mitochondrial biogenesis, fatty acid beta-oxidation and lipid metabolism. May play a role in the circadian control of neutrophilic inflammation in the lung. In Rattus norvegicus (Rat), this protein is Nuclear receptor subfamily 1 group D member 2.